We begin with the raw amino-acid sequence, 362 residues long: Endopolygalacturonase II (362 aa).

The signal sequence occupies residues 1-21 (MHSFASLLAYGLAASATLASA). Residues 22-27 (SPIEAR) constitute a propeptide that is removed on maturation. A disulfide bridge links Cys30 with Cys45. One copy of the PbH1 1 repeat lies at 156–186 (ADDITLTDITINNADGDTLGGHNTDAFDVGN). The Proton donor role is filled by Asp201. An intrachain disulfide couples Cys203 to Cys219. Residue His223 is part of the active site. PbH1 repeat units follow at residues 238–259 (VKNV…RIKT), 267–289 (VSEI…VIQQ), and 301–322 (TNGV…DSKA). N-linked (GlcNAc...) (high mannose) asparagine glycosylation is present at Asn240. 2 disulfide bridges follow: Cys329–Cys334 and Cys353–Cys362.

This sequence belongs to the glycosyl hydrolase 28 family.

Its subcellular location is the secreted. The enzyme catalyses (1,4-alpha-D-galacturonosyl)n+m + H2O = (1,4-alpha-D-galacturonosyl)n + (1,4-alpha-D-galacturonosyl)m.. Functionally, involved in maceration and soft-rotting of plant tissue. Hydrolyzes the 1,4-alpha glycosidic bonds of de-esterified pectate in the smooth region of the plant cell wall. The polypeptide is Endopolygalacturonase II (Aspergillus niger).